The primary structure comprises 198 residues: Nucleoside triphosphate pyrophosphatase 1 (198 aa).

Aspartate 75 acts as the Proton acceptor in catalysis.

The protein belongs to the Maf family. The cofactor is a divalent metal cation.

It localises to the cytoplasm. It carries out the reaction a ribonucleoside 5'-triphosphate + H2O = a ribonucleoside 5'-phosphate + diphosphate + H(+). The catalysed reaction is a 2'-deoxyribonucleoside 5'-triphosphate + H2O = a 2'-deoxyribonucleoside 5'-phosphate + diphosphate + H(+). Nucleoside triphosphate pyrophosphatase. May have a dual role in cell division arrest and in preventing the incorporation of modified nucleotides into cellular nucleic acids. The protein is Nucleoside triphosphate pyrophosphatase 1 of Jannaschia sp. (strain CCS1).